The following is a 444-amino-acid chain: Exopolygalacturonase clone GBGA483 (444 aa).

A signal peptide spans 1 to 23 (MVGSHKASGVLLVLLVVMATTIA). 5 PbH1 repeats span residues 220-246 (CKNITLSDIGIDAPPESLNTDGIHIGR), 247-268 (SNGVNLIGAKIKTGDDCVSIGD), 270-290 (TENLIVENVECGPGHGISIGS), 300-321 (VKGVTVRKCLIKNTDNGVRIKT), and 330-351 (ASNILFEDITMDNVSLPVLIDQ). Residue asparagine 222 is glycosylated (N-linked (GlcNAc...) asparagine). The active-site Proton donor is aspartate 261. A disulfide bridge connects residues cysteine 263 and cysteine 280. Residue histidine 284 is part of the active site. An N-linked (GlcNAc...) asparagine glycan is attached at asparagine 342. 2 disulfides stabilise this stretch: cysteine 391–cysteine 397 and cysteine 420–cysteine 436.

It belongs to the glycosyl hydrolase 28 family.

It is found in the secreted. Its subcellular location is the cell wall. The enzyme catalyses [(1-&gt;4)-alpha-D-galacturonosyl](n) + H2O = alpha-D-galacturonate + [(1-&gt;4)-alpha-D-galacturonosyl](n-1). May function in depolymerizing pectin during pollen development, germination, and tube growth. Acts as an exo-polygalacturonase. This is Exopolygalacturonase clone GBGA483 from Arabidopsis thaliana (Mouse-ear cress).